A 400-amino-acid polypeptide reads, in one-letter code: DNA polymerase IV (400 aa).

Positions 5 to 187 (IFLVDMNAFF…LPVEFMNGIG (183 aa)) constitute a UmuC domain. Positions 9 and 105 each coordinate Mg(2+). The active site involves Glu-106.

Belongs to the DNA polymerase type-Y family. As to quaternary structure, monomer. The cofactor is Mg(2+).

The protein localises to the cytoplasm. The catalysed reaction is DNA(n) + a 2'-deoxyribonucleoside 5'-triphosphate = DNA(n+1) + diphosphate. In terms of biological role, poorly processive, error-prone DNA polymerase involved in untargeted mutagenesis. Copies undamaged DNA at stalled replication forks, which arise in vivo from mismatched or misaligned primer ends. These misaligned primers can be extended by PolIV. Exhibits no 3'-5' exonuclease (proofreading) activity. May be involved in translesional synthesis, in conjunction with the beta clamp from PolIII. The protein is DNA polymerase IV of Clostridium kluyveri (strain ATCC 8527 / DSM 555 / NBRC 12016 / NCIMB 10680 / K1).